A 636-amino-acid polypeptide reads, in one-letter code: Chaperone protein DnaK (636 aa).

Thr-198 carries the post-translational modification Phosphothreonine; by autocatalysis. The interval 602 to 636 is disordered; that stretch reads QAEGAQPGGEAAGEASAKDEKVVDADFEEVKDDKK. A compositionally biased stretch (acidic residues) spans 626-636; that stretch reads ADFEEVKDDKK.

The protein belongs to the heat shock protein 70 family.

Acts as a chaperone. This chain is Chaperone protein DnaK, found in Geobacter sulfurreducens (strain ATCC 51573 / DSM 12127 / PCA).